The following is a 327-amino-acid chain: Beta-1,4-galactosyltransferase 7 (327 aa).

Residues 1-30 (MLPSRRKAAQLPWEDGRARLLPGGLRRKCS) are Cytoplasmic-facing. The chain crosses the membrane as a helical; Signal-anchor for type II membrane protein span at residues 31 to 51 (IFHLFIAFLLLVFFSLLWLQL). Over 52–327 (SCSGDMAQVT…KTATPWCIFG (276 aa)) the chain is Lumenal. The tract at residues 61 to 88 (TRGQGQETSGPPRACPPEPPPEHWEEDE) is disordered. UDP-alpha-D-galactose is bound by residues 100–104 (PFRER) and 139–141 (FNR). Asn-154 carries N-linked (GlcNAc...) asparagine glycosylation. Residues 164–165 (VD), Tyr-194, and Trp-224 each bind UDP-alpha-D-galactose. Asp-165 is a binding site for Mn(2+). An N-acetyl-D-glucosamine-binding site is contributed by 226–229 (REDD). Mn(2+) is bound at residue His-257. Residues 257–259 (HLH) and Arg-266 each bind UDP-alpha-D-galactose.

The protein belongs to the glycosyltransferase 7 family. Mn(2+) serves as cofactor.

The protein resides in the golgi apparatus. Its subcellular location is the golgi stack membrane. The enzyme catalyses 3-O-(beta-D-xylosyl)-L-seryl-[protein] + UDP-alpha-D-galactose = 3-O-(beta-D-galactosyl-(1-&gt;4)-beta-D-xylosyl)-L-seryl-[protein] + UDP + H(+). Its pathway is protein modification; protein glycosylation. Its function is as follows. Required for the biosynthesis of the tetrasaccharide linkage region of proteoglycans, especially for small proteoglycans in skin fibroblasts. The sequence is that of Beta-1,4-galactosyltransferase 7 (B4galt7) from Mus musculus (Mouse).